We begin with the raw amino-acid sequence, 309 residues long: 4-hydroxy-3-methylbut-2-enyl diphosphate reductase (309 aa).

Cys12 serves as a coordination point for [4Fe-4S] cluster. Residues His41 and His74 each contribute to the (2E)-4-hydroxy-3-methylbut-2-enyl diphosphate site. 2 residues coordinate dimethylallyl diphosphate: His41 and His74. Residues His41 and His74 each coordinate isopentenyl diphosphate. Cys96 contributes to the [4Fe-4S] cluster binding site. Residue His124 coordinates (2E)-4-hydroxy-3-methylbut-2-enyl diphosphate. Residue His124 participates in dimethylallyl diphosphate binding. An isopentenyl diphosphate-binding site is contributed by His124. The Proton donor role is filled by Glu126. Thr167 contacts (2E)-4-hydroxy-3-methylbut-2-enyl diphosphate. Residue Cys197 coordinates [4Fe-4S] cluster. Positions 225, 226, 227, and 269 each coordinate (2E)-4-hydroxy-3-methylbut-2-enyl diphosphate. Residues Ser225, Ser226, Asn227, and Ser269 each coordinate dimethylallyl diphosphate. Isopentenyl diphosphate contacts are provided by Ser225, Ser226, Asn227, and Ser269.

It belongs to the IspH family. [4Fe-4S] cluster serves as cofactor.

The catalysed reaction is isopentenyl diphosphate + 2 oxidized [2Fe-2S]-[ferredoxin] + H2O = (2E)-4-hydroxy-3-methylbut-2-enyl diphosphate + 2 reduced [2Fe-2S]-[ferredoxin] + 2 H(+). It catalyses the reaction dimethylallyl diphosphate + 2 oxidized [2Fe-2S]-[ferredoxin] + H2O = (2E)-4-hydroxy-3-methylbut-2-enyl diphosphate + 2 reduced [2Fe-2S]-[ferredoxin] + 2 H(+). The protein operates within isoprenoid biosynthesis; dimethylallyl diphosphate biosynthesis; dimethylallyl diphosphate from (2E)-4-hydroxy-3-methylbutenyl diphosphate: step 1/1. It participates in isoprenoid biosynthesis; isopentenyl diphosphate biosynthesis via DXP pathway; isopentenyl diphosphate from 1-deoxy-D-xylulose 5-phosphate: step 6/6. In terms of biological role, catalyzes the conversion of 1-hydroxy-2-methyl-2-(E)-butenyl 4-diphosphate (HMBPP) into a mixture of isopentenyl diphosphate (IPP) and dimethylallyl diphosphate (DMAPP). Acts in the terminal step of the DOXP/MEP pathway for isoprenoid precursor biosynthesis. In Shewanella halifaxensis (strain HAW-EB4), this protein is 4-hydroxy-3-methylbut-2-enyl diphosphate reductase.